A 977-amino-acid chain; its full sequence is ELMO domain-containing protein A (977 aa).

Residues 383–561 enclose the ELMO domain; that stretch reads EHDALLMKLW…SVKNLIITAL (179 aa). 2 stretches are compositionally biased toward low complexity: residues 792 to 838 and 852 to 897; these read SSNN…NNSG and QQQQ…SSSS. Positions 792 to 899 are disordered; sequence SSNNNIKDNL…SSSSSSSSNP (108 aa).

Associates with mhcA.

Functionally, functions as a negative regulator of actin polymerization. Modulates actin/myosin II at cortex actinomyosins to prevent excessive F-actin polymerization around the cell periphery, thereby maintaining proper cell shape during phagocytosis and chemotaxis. In Dictyostelium discoideum (Social amoeba), this protein is ELMO domain-containing protein A (elmoA).